A 91-amino-acid chain; its full sequence is PqqA binding protein (91 aa).

It belongs to the PqqD family. In terms of assembly, monomer. Interacts with PqqE.

It functions in the pathway cofactor biosynthesis; pyrroloquinoline quinone biosynthesis. Functions as a PqqA binding protein and presents PqqA to PqqE, in the pyrroloquinoline quinone (PQQ) biosynthetic pathway. The protein is PqqA binding protein of Pseudomonas fluorescens (strain SBW25).